A 336-amino-acid chain; its full sequence is Homoserine dehydrogenase (336 aa).

Residue Phe-8 participates in NADPH binding. Positions 10, 11, and 94 each coordinate NAD(+). Ile-11, Thr-94, and Lys-123 together coordinate NADPH. Positions 11, 94, and 123 each coordinate NADP(+). Glu-147, Val-150, and Gly-152 together coordinate Na(+). Positions 205 and 208 each coordinate NADP(+). L-homoserine is bound by residues Glu-208 and Asp-219. The active-site Proton donor is Lys-223. Gly-315 lines the NADPH pocket. Gly-315 is a binding site for NAD(+). Residue Gly-315 coordinates NADP(+).

The protein belongs to the homoserine dehydrogenase family. A metal cation serves as cofactor.

The enzyme catalyses L-homoserine + NADP(+) = L-aspartate 4-semialdehyde + NADPH + H(+). It carries out the reaction L-homoserine + NAD(+) = L-aspartate 4-semialdehyde + NADH + H(+). Its pathway is amino-acid biosynthesis; L-methionine biosynthesis via de novo pathway; L-homoserine from L-aspartate: step 3/3. It participates in amino-acid biosynthesis; L-threonine biosynthesis; L-threonine from L-aspartate: step 3/5. Catalyzes the conversion of L-aspartate-beta-semialdehyde (L-Asa) to L-homoserine (L-Hse), the third step in the biosynthesis of threonine and methionine from aspartate. This chain is Homoserine dehydrogenase (hom), found in Methanocaldococcus jannaschii (strain ATCC 43067 / DSM 2661 / JAL-1 / JCM 10045 / NBRC 100440) (Methanococcus jannaschii).